Consider the following 513-residue polypeptide: ATP synthase subunit alpha 1 (513 aa).

169-176 (GDRQTGKT) contributes to the ATP binding site.

The protein belongs to the ATPase alpha/beta chains family. As to quaternary structure, F-type ATPases have 2 components, CF(1) - the catalytic core - and CF(0) - the membrane proton channel. CF(1) has five subunits: alpha(3), beta(3), gamma(1), delta(1), epsilon(1). CF(0) has three main subunits: a(1), b(2) and c(9-12). The alpha and beta chains form an alternating ring which encloses part of the gamma chain. CF(1) is attached to CF(0) by a central stalk formed by the gamma and epsilon chains, while a peripheral stalk is formed by the delta and b chains.

The protein resides in the cell inner membrane. It catalyses the reaction ATP + H2O + 4 H(+)(in) = ADP + phosphate + 5 H(+)(out). In terms of biological role, produces ATP from ADP in the presence of a proton gradient across the membrane. The alpha chain is a regulatory subunit. This is ATP synthase subunit alpha 1 from Vibrio campbellii (strain ATCC BAA-1116).